Here is a 465-residue protein sequence, read N- to C-terminus: Chromosomal replication initiator protein DnaA (465 aa).

A domain I, interacts with DnaA modulators region spans residues 1 to 80 (MLWTDCLTRL…VEILVDSRPG (80 aa)). Residues 80–127 (GAILSPAEQPATTTAALSSTPVVPQRVKKEVVEPAATQSNKILNSKKR) form a domain II region. A domain III, AAA+ region region spans residues 128–345 (LLNPLFTFSL…GALNKVVAIA (218 aa)). Positions 173, 175, 176, and 177 each coordinate ATP. The interval 346 to 465 (RFKGSQIDLD…YKNLLRLLQS (120 aa)) is domain IV, binds dsDNA.

It belongs to the DnaA family. As to quaternary structure, oligomerizes as a right-handed, spiral filament on DNA at oriC.

The protein localises to the cytoplasm. Plays an essential role in the initiation and regulation of chromosomal replication. ATP-DnaA binds to the origin of replication (oriC) to initiate formation of the DNA replication initiation complex once per cell cycle. Binds the DnaA box (a 9 base pair repeat at the origin) and separates the double-stranded (ds)DNA. Forms a right-handed helical filament on oriC DNA; dsDNA binds to the exterior of the filament while single-stranded (ss)DNA is stabiized in the filament's interior. The ATP-DnaA-oriC complex binds and stabilizes one strand of the AT-rich DNA unwinding element (DUE), permitting loading of DNA polymerase. After initiation quickly degrades to an ADP-DnaA complex that is not apt for DNA replication. Binds acidic phospholipids. The protein is Chromosomal replication initiator protein DnaA of Acinetobacter baylyi (strain ATCC 33305 / BD413 / ADP1).